The following is a 224-amino-acid chain: DNA mismatch repair protein MutH (224 aa).

Belongs to the MutH family.

It localises to the cytoplasm. Functionally, sequence-specific endonuclease that cleaves unmethylated GATC sequences. It is involved in DNA mismatch repair. The sequence is that of DNA mismatch repair protein MutH from Histophilus somni (strain 2336) (Haemophilus somnus).